The chain runs to 683 residues: Hexamerin 70b (683 aa).

A signal peptide spans 1–21 (MIVIMKAGFLFLASLCLLVQA). Positions 32–153 (VTRQKNIYEL…VAVIHRPDTK (122 aa)) constitute a Hemocyanin N-terminal domain. Residues 159-428 (PMYEVMPHLY…SIYKTILDYY (270 aa)) form the Hemocyanin middle domain. Asn-203 carries an N-linked (GlcNAc...) asparagine glycan. Residues 437–673 (KYTTEELNFP…IHVKEVLVHH (237 aa)) form the Hemocyanin C-terminal domain.

It belongs to the hemocyanin/hexamerin family. As to quaternary structure, probable homohexamer. In terms of tissue distribution, expressed in the fat body and secreted into the hemolymph (at protein level). Present in trophocytes and oenocytes of the fat body (at protein level).

It is found in the secreted. The protein resides in the nucleus. The protein localises to the cytoplasm. It localises to the cytoplasmic granule. In terms of biological role, storage protein that may function as a nutrient supply to compensate for lack of dietary proteins during metamorphosis and egg production. The sequence is that of Hexamerin 70b from Apis mellifera (Honeybee).